Consider the following 165-residue polypeptide: Chorismate pyruvate-lyase (165 aa).

Met35, Arg77, Leu115, and Glu156 together coordinate substrate.

Belongs to the UbiC family. Monomer.

Its subcellular location is the cytoplasm. It carries out the reaction chorismate = 4-hydroxybenzoate + pyruvate. Its pathway is cofactor biosynthesis; ubiquinone biosynthesis. In terms of biological role, removes the pyruvyl group from chorismate, with concomitant aromatization of the ring, to provide 4-hydroxybenzoate (4HB) for the ubiquinone pathway. The chain is Chorismate pyruvate-lyase from Salmonella enteritidis PT4 (strain P125109).